The primary structure comprises 239 residues: Transcriptional regulatory protein BtsR (239 aa).

Residues 3 to 116 form the Response regulatory domain; the sequence is KVLIVDDEPL…RLEKTLARLR (114 aa). At D54 the chain carries 4-aspartylphosphate. The HTH LytTR-type domain maps to 137–239; that stretch reads IPCTGHSRIY…LKSLKEAIGL (103 aa).

Phosphorylated by BtsS.

Functionally, member of the two-component regulatory system BtsS/BtsR. BtsR regulates expression of btsT by binding to its promoter region. This is Transcriptional regulatory protein BtsR from Escherichia coli O6:H1 (strain CFT073 / ATCC 700928 / UPEC).